The sequence spans 189 residues: Endoribonuclease YbeY (189 aa).

Residues 1-10 are compositionally biased toward polar residues; the sequence is MKERSSSPGT. Residues 1–23 are disordered; sequence MKERSSSPGTPDSGRRARPKPAK. Zn(2+) is bound by residues histidine 141, histidine 145, and histidine 151.

This sequence belongs to the endoribonuclease YbeY family. It depends on Zn(2+) as a cofactor.

The protein resides in the cytoplasm. Functionally, single strand-specific metallo-endoribonuclease involved in late-stage 70S ribosome quality control and in maturation of the 3' terminus of the 16S rRNA. The protein is Endoribonuclease YbeY of Nitrosospira multiformis (strain ATCC 25196 / NCIMB 11849 / C 71).